The following is a 560-amino-acid chain: MECFVPLRCDLDGSNIEQLRQSHLSRKFIIFDEQLNLWLWFQGNSQENKRFVLQNMIILINEAQVTRTSTIDDYFTQVENNENLWRLKNDCCSKILFKSNVVMNNGYNNQIKFVFEYKSVDANFNNQDSLQDPQAKYTLDKYSSEEILPSFEPVYSWSSAATKSSKNTNNHLEKNNRATHRVSSKNSEVHEADVSRNPNTFTLKLQYPIFSLLNMRLRNISLKSEHCILSSLDFQTSKASEQLTKKFIYPQEHNSFLKLNFQEISYKLIDGTSQIELDPICPLKVPLTAFSYDSISATFKLVLLPKSTQPHRVKITLAYELELHPNLKLPVRTSWETEVTLKRSMPISSTSSQYSSNNNNTNHSASFNGAANNVNSGGLANLRLGGVSSSRFSLGAASTTSLVNSKLSNVKFKFINSNIKVIKGEKFTMRLQIINSSSSPLDLVVYYNNTINPIPSANNVRNSNGINNCGMNNGTIPNSPLTLENQYQLHNKYRKIAEGIILLSNDYKIPVVPPRETYFADLRFIGIMSGYYGTLSGLKVLDLNTNELIEVGNGASVLIQ.

The interval 164 to 193 (SSKNTNNHLEKNNRATHRVSSKNSEVHEAD) is disordered. A phosphoserine mark is found at serine 393 and serine 398.

As to quaternary structure, part of the multisubunit TRAPP (transport protein particle) II complex composed of BET3, BET5, TRS20, TRS23, TRS31, TRS33, TRS65, TRS120 and TRS130. Interacts directly with TRS120 and TRS130.

It is found in the cytoplasm. It localises to the golgi apparatus. The protein localises to the cis-Golgi network. It participates in glycan metabolism; beta-glucan biosynthesis. Functionally, specific subunit of the TRAPP II complex, a highly conserved vesicle tethering complex that functions in the late Golgi as a guanine nucleotide exchanger (GEF) for the Golgi YPT1 GTPase. TRS65 plays a role in the YPT GEF activity of TRAPP II in concert with the two other TRAPP II-specific subunits TRS120 and TRS130. Involved in cell wall (1--&gt;6)-beta-glucan synthesis. This chain is Trafficking protein particle complex II-specific subunit 65 (TRS65), found in Saccharomyces cerevisiae (strain ATCC 204508 / S288c) (Baker's yeast).